We begin with the raw amino-acid sequence, 329 residues long: Beta-ketoacyl-[acyl-carrier-protein] synthase III (329 aa).

Active-site residues include Cys123 and His256. The interval 257 to 261 (QANIR) is ACP-binding. Asn286 is an active-site residue.

The protein belongs to the thiolase-like superfamily. FabH family. Homodimer.

The protein resides in the cytoplasm. The enzyme catalyses malonyl-[ACP] + acetyl-CoA + H(+) = 3-oxobutanoyl-[ACP] + CO2 + CoA. The protein operates within lipid metabolism; fatty acid biosynthesis. Catalyzes the condensation reaction of fatty acid synthesis by the addition to an acyl acceptor of two carbons from malonyl-ACP. Catalyzes the first condensation reaction which initiates fatty acid synthesis and may therefore play a role in governing the total rate of fatty acid production. Possesses both acetoacetyl-ACP synthase and acetyl transacylase activities. Its substrate specificity determines the biosynthesis of branched-chain and/or straight-chain of fatty acids. The chain is Beta-ketoacyl-[acyl-carrier-protein] synthase III from Burkholderia lata (strain ATCC 17760 / DSM 23089 / LMG 22485 / NCIMB 9086 / R18194 / 383).